Consider the following 499-residue polypeptide: MSLRLTNTLTRRTEPFTPLKDGHVSIYCCGVTVYDLCHLGHARSYIAWDVLRRYLLWRGYSVTFVQNFTDIDDKILKRAAEKKCSMEHISEQNIEAFHQDMDALGILRPDRMPRATQCLDGIRALIGELETSGAAYSVDGDVYFAVMKHHGYGKLSGRDLNEQQQNADGRVADAEEARKQHSFDFALWKGAKTGEPSFPSPWGAGRPGWHIECSAMVREELGETIDIHLGGADLIFPHHENEIAQSEAATGKQLARYWLHNGMVNVGGQKMSKSLGNFTTIRALLESGVSPMTLRLFILQAHYRKPLDFTADAINAAATGWKGLNAALGLGNIYAEALNWPECKPLPQEVMQPAHSSTLEQCSEIRQHFIDALDDDLNSSGAIAVLFDLARPLRALANRLERGDTKAIQETAQLNLLPRWQLLVELANVLGLEAEKAAKLAPEGNNRVDENHIQLAIAARKEAKAARDFAKADRIRDELRAQGIELIDKPGGLTDWISS.

Cys-29 provides a ligand contact to Zn(2+). The short motif at 31-41 (VTVYDLCHLGH) is the 'HIGH' region element. Zn(2+) contacts are provided by Cys-213, His-238, and Glu-242. Positions 270–274 (KMSKS) match the 'KMSKS' region motif. Lys-273 provides a ligand contact to ATP.

It belongs to the class-I aminoacyl-tRNA synthetase family. Monomer. Zn(2+) serves as cofactor.

The protein localises to the cytoplasm. It carries out the reaction tRNA(Cys) + L-cysteine + ATP = L-cysteinyl-tRNA(Cys) + AMP + diphosphate. The chain is Cysteine--tRNA ligase from Prochlorococcus marinus (strain MIT 9303).